We begin with the raw amino-acid sequence, 255 residues long: Ribonuclease HII (255 aa).

The 184-residue stretch at 72 to 255 folds into the RNase H type-2 domain; that stretch reads AIICGIDEVG…KSFEPIKSLL (184 aa). Positions 78, 79, and 170 each coordinate a divalent metal cation.

Belongs to the RNase HII family. It depends on Mn(2+) as a cofactor. Requires Mg(2+) as cofactor.

Its subcellular location is the cytoplasm. It catalyses the reaction Endonucleolytic cleavage to 5'-phosphomonoester.. Its function is as follows. Endonuclease that specifically degrades the RNA of RNA-DNA hybrids. The chain is Ribonuclease HII from Staphylococcus aureus (strain bovine RF122 / ET3-1).